Reading from the N-terminus, the 388-residue chain is Succinate--CoA ligase [ADP-forming] subunit beta (388 aa).

The 236-residue stretch at 9-244 folds into the ATP-grasp domain; sequence KALFAEYGLP…PSQDDAREAH (236 aa). Residues Lys-46, 53 to 55, Glu-99, Thr-102, and Glu-107 contribute to the ATP site; that span reads GRG. Mg(2+)-binding residues include Asn-199 and Asp-213. Substrate-binding positions include Asn-264 and 321 to 323; that span reads GIV.

The protein belongs to the succinate/malate CoA ligase beta subunit family. Heterotetramer of two alpha and two beta subunits. The cofactor is Mg(2+).

The enzyme catalyses succinate + ATP + CoA = succinyl-CoA + ADP + phosphate. The catalysed reaction is GTP + succinate + CoA = succinyl-CoA + GDP + phosphate. It participates in carbohydrate metabolism; tricarboxylic acid cycle; succinate from succinyl-CoA (ligase route): step 1/1. Its function is as follows. Succinyl-CoA synthetase functions in the citric acid cycle (TCA), coupling the hydrolysis of succinyl-CoA to the synthesis of either ATP or GTP and thus represents the only step of substrate-level phosphorylation in the TCA. The beta subunit provides nucleotide specificity of the enzyme and binds the substrate succinate, while the binding sites for coenzyme A and phosphate are found in the alpha subunit. The polypeptide is Succinate--CoA ligase [ADP-forming] subunit beta (Shewanella sediminis (strain HAW-EB3)).